The sequence spans 206 residues: ATP phosphoribosyltransferase (206 aa).

Belongs to the ATP phosphoribosyltransferase family. Short subfamily. In terms of assembly, heteromultimer composed of HisG and HisZ subunits.

The protein resides in the cytoplasm. It catalyses the reaction 1-(5-phospho-beta-D-ribosyl)-ATP + diphosphate = 5-phospho-alpha-D-ribose 1-diphosphate + ATP. Its pathway is amino-acid biosynthesis; L-histidine biosynthesis; L-histidine from 5-phospho-alpha-D-ribose 1-diphosphate: step 1/9. In terms of biological role, catalyzes the condensation of ATP and 5-phosphoribose 1-diphosphate to form N'-(5'-phosphoribosyl)-ATP (PR-ATP). Has a crucial role in the pathway because the rate of histidine biosynthesis seems to be controlled primarily by regulation of HisG enzymatic activity. This Brachyspira hyodysenteriae (strain ATCC 49526 / WA1) protein is ATP phosphoribosyltransferase.